Here is a 143-residue protein sequence, read N- to C-terminus: MEKVKLGMVVAEFNRDITYMMEILGKEHAEFLGAEVSEVIRVPGTFDIPIAVKKMLEKGRVDAVVAIGCVIEGETEHDEIVAQHAARKIMDLSLEYGKPVTLGISGPGMGRIAATERVDYAKRAVEAAVKLVKRLKEYDAEGS.

Residues Phe-13, 45 to 47 (TFD), and 69 to 71 (CVI) each bind 5-amino-6-(D-ribitylamino)uracil. Position 74–75 (74–75 (ET)) interacts with (2S)-2-hydroxy-3-oxobutyl phosphate. Residue His-77 is the Proton donor of the active site. Residue Leu-102 participates in 5-amino-6-(D-ribitylamino)uracil binding. Arg-117 contributes to the (2S)-2-hydroxy-3-oxobutyl phosphate binding site.

This sequence belongs to the DMRL synthase family.

The enzyme catalyses (2S)-2-hydroxy-3-oxobutyl phosphate + 5-amino-6-(D-ribitylamino)uracil = 6,7-dimethyl-8-(1-D-ribityl)lumazine + phosphate + 2 H2O + H(+). The protein operates within cofactor biosynthesis; riboflavin biosynthesis; riboflavin from 2-hydroxy-3-oxobutyl phosphate and 5-amino-6-(D-ribitylamino)uracil: step 1/2. Functionally, catalyzes the formation of 6,7-dimethyl-8-ribityllumazine by condensation of 5-amino-6-(D-ribitylamino)uracil with 3,4-dihydroxy-2-butanone 4-phosphate. This is the penultimate step in the biosynthesis of riboflavin. This Archaeoglobus fulgidus (strain ATCC 49558 / DSM 4304 / JCM 9628 / NBRC 100126 / VC-16) protein is 6,7-dimethyl-8-ribityllumazine synthase.